The sequence spans 726 residues: Tripartite terminase subunit 1 (726 aa).

The C3H1-type zinc-finger motif lies at 189–217 (CMKCYEELTLTPNQGKSLRKRLHGKFCNH). Position 626-633 (626-633 (YNDVFGKR)) interacts with ATP.

It belongs to the herpesviridae TRM1 protein family. In terms of assembly, associates with TRM2 and TRM3 to form the tripartite terminase complex. Interacts with portal protein.

It is found in the host nucleus. Its function is as follows. Component of the molecular motor that translocates viral genomic DNA in empty capsid during DNA packaging. Forms a tripartite terminase complex together with TRM2 and TRM3 in the host cytoplasm. Once the complex reaches the host nucleus, it interacts with the capsid portal vertex. This portal forms a ring in which genomic DNA is translocated into the capsid. TRM1 carries an endonuclease activity that plays an important role for the cleavage of concatemeric viral DNA into unit length genomes. This is Tripartite terminase subunit 1 from Human herpesvirus 6B (strain Z29) (HHV-6 variant B).